The following is a 602-amino-acid chain: Elongation factor 4 (602 aa).

In terms of domain architecture, tr-type G spans 7 to 189 (SKIRNFCIIA…AVVSRIPHPQ (183 aa)). Residues 19–24 (DHGKST) and 136–139 (NKVD) each bind GTP.

The protein belongs to the TRAFAC class translation factor GTPase superfamily. Classic translation factor GTPase family. LepA subfamily.

The protein localises to the cell inner membrane. The enzyme catalyses GTP + H2O = GDP + phosphate + H(+). Required for accurate and efficient protein synthesis under certain stress conditions. May act as a fidelity factor of the translation reaction, by catalyzing a one-codon backward translocation of tRNAs on improperly translocated ribosomes. Back-translocation proceeds from a post-translocation (POST) complex to a pre-translocation (PRE) complex, thus giving elongation factor G a second chance to translocate the tRNAs correctly. Binds to ribosomes in a GTP-dependent manner. The chain is Elongation factor 4 from Prochlorococcus marinus subsp. pastoris (strain CCMP1986 / NIES-2087 / MED4).